The following is a 334-amino-acid chain: Phenazine-1-carboxylate N-methyltransferase (334 aa).

Asp198 and Arg241 together coordinate S-adenosyl-L-methionine.

It belongs to the class I-like SAM-binding methyltransferase superfamily. Cation-independent O-methyltransferase family. In terms of assembly, homodimer in solution. Probably interacts transiently with PhzS.

It catalyses the reaction phenazine-1-carboxylate + S-adenosyl-L-methionine = 5-methyl-phenazine-1-carboxylate + S-adenosyl-L-homocysteine. Its pathway is secondary metabolite biosynthesis; pyocyanine biosynthesis. Its activity is regulated as follows. In vitro, requires PhzS for activity. In terms of biological role, involved in the biosynthesis of pyocyanine, a blue-pigmented phenazine derivative, which plays a role in virulence. Converts phenazine-1-carboxylate (PCA) to 5-methylphenazine-1-carboxylate (5-methyl-PCA). This is Phenazine-1-carboxylate N-methyltransferase from Pseudomonas aeruginosa (strain ATCC 15692 / DSM 22644 / CIP 104116 / JCM 14847 / LMG 12228 / 1C / PRS 101 / PAO1).